The chain runs to 124 residues: Small ribosomal subunit protein bS6 (124 aa).

Residues 96–124 form a disordered region; that stretch reads ETGPSPMMKEVQREEAKKAAAAQPTEAQA. Residues 114-124 are compositionally biased toward low complexity; the sequence is AAAAQPTEAQA.

Belongs to the bacterial ribosomal protein bS6 family.

In terms of biological role, binds together with bS18 to 16S ribosomal RNA. This is Small ribosomal subunit protein bS6 from Burkholderia vietnamiensis (strain G4 / LMG 22486) (Burkholderia cepacia (strain R1808)).